The following is a 305-amino-acid chain: Coiled-coil domain-containing protein 83 (305 aa).

The interval 1–25 (MDSSAKGSKKDAPDGPPKDSKLPVS) is disordered. Residues 8–21 (SKKDAPDGPPKDSK) are compositionally biased toward basic and acidic residues. A coiled-coil region spans residues 37-186 (ENAVERFMFH…LEDEKKRISR (150 aa)).

This chain is Coiled-coil domain-containing protein 83 (Ccdc83), found in Mus musculus (Mouse).